The chain runs to 576 residues: Gamma-aminobutyric acid receptor subunit beta (576 aa).

The signal sequence occupies residues 1–29; the sequence is MSDSMLYQTLQTCLPKSRLITLWLAFTLA. The Extracellular segment spans residues 30–268; sequence MLIQEPRRHA…IQFVRSMGYY (239 aa). N-linked (GlcNAc...) asparagine glycosylation is present at N56. C183 and C197 are disulfide-bonded. N251 carries an N-linked (GlcNAc...) asparagine glycan. 3 helical membrane passes run 269 to 289, 298 to 320, and 330 to 350; these read LIQI…SFWL, VALG…AALP, and VYLG…ATVG. Residues 351–540 lie on the Cytoplasmic side of the membrane; the sequence is YMAKRIQMRK…TPSDIDKYSR (190 aa). Disordered regions lie at residues 372–418 and 452–507; these read QKKQ…QTVS and HDPK…GDAE. Residues 398-412 are compositionally biased toward basic residues; it reads HGHGHGHHSHGHPHV. Residues 475–490 are compositionally biased toward pro residues; the sequence is PVGPHGPGPQGPPGGP. The span at 491–501 shows a compositional bias: gly residues; the sequence is PAGGGGGGAPP. Residues 541–561 form a helical membrane-spanning segment; sequence IVFPVCFVCFNLMYWIIYLHV.

Belongs to the ligand-gated ion channel (TC 1.A.9) family. Gamma-aminobutyric acid receptor (TC 1.A.9.5) subfamily. Homomultimer.

It is found in the postsynaptic cell membrane. It localises to the cell membrane. GABA, an inhibitory neurotransmitter, mediates neuronal inhibition by binding to the GABA receptor and opening an integral chloride channel. The polypeptide is Gamma-aminobutyric acid receptor subunit beta (Musca domestica (House fly)).